Reading from the N-terminus, the 602-residue chain is MSHESHHSEGMATSGEVHEIREEEPEIETMHIENSVEGESGRQRTESTASVNSESWQNSDEMMMNMRRAQSLLDQGASCFQIIQQVFPEFDASRFENMSERVHFKVLSDLLERAPTRQKLFTYNSLSDAVDLFRTRKNILVLTGAGVSVSCGIPDFRSKDGIYARLRSEFPNLPDPTAMFDIRYFRDNPAPFYNFAREIFPGQFTPSVSHRFIKQLESSGRLLRNYTQNIDTLEHQTGIKRVVECHGSFSKCTCTSCGNQTDGMEIREDVLAMKVARCKICHGVIKPNIVFFGEDLGREFHRHVTEDKDKVDLIVVIGSSLKVRPVALIPHCVDKNVPQILINRESLPHYNADIELLGNCDDIVRDICYALGGSFAEMIASYDACVERSPSTSRAKRQLITQQEFLNICAQERRDKTPVPEPESSEPSTKRPRMSTTEDMEGNQFQQIQKHTSSEDDDEDNTRNSDEVLREIKHPRLISITDMLNDKKCVAISAYQTVFPGAECSFDMETLKLVHDVPHRNRHESDSSCESCSTVPGSDKSEANPLSRSQSTDDIVYAEIRRKEVFLDLQRCDSCDNDLQYELSDPIDPETFAKRIADMCIE.

Residues 25–57 (PEIETMHIENSVEGESGRQRTESTASVNSESWQ) are disordered. A compositionally biased stretch (polar residues) spans 46–57 (ESTASVNSESWQ). A Deacetylase sirtuin-type domain is found at 119–374 (KLFTYNSLSD…RDICYALGGS (256 aa)). NAD(+) is bound by residues 144–163 (GAGVSVSCGIPDFRSKDGIY) and 228–231 (QNID). The active-site Proton acceptor is the H246. Zn(2+) is bound by residues C254, C257, C278, and C281. Residues 318–320 (GSS), 343–345 (NRE), and C360 each bind NAD(+). 2 disordered regions span residues 411-468 (QERR…SDEV) and 520-551 (RNRHESDSSCESCSTVPGSDKSEANPLSRSQS).

This sequence belongs to the sirtuin family. Class I subfamily. As to quaternary structure, interacts with ftt-2 and par-5. Interacts with daf-16 following heat-shock, which causes daf-16 to accumulate in the nucleus. Interaction with daf-16 is promoted by ftt-2. Zn(2+) is required as a cofactor.

The protein resides in the nucleus. It catalyses the reaction N(6)-acetyl-L-lysyl-[protein] + NAD(+) + H2O = 2''-O-acetyl-ADP-D-ribose + nicotinamide + L-lysyl-[protein]. Functionally, NAD-dependent deacetylase. Required for a reduction of the 'Lys-16' acetylation of histone H4 (H4K16ac) on dosage-compensated X chromosomes in hermaphrodites. Functions upstream of daf-16 in the insulin-like signaling pathway, promoting daf-16 mediated transcriptional activation and increased life-span. May also regulate life-span independently of daf-16 by modulating the transcription of genes involved in the stress response of the endoplasmic reticulum (ER). Acts upstream of the nicotinic acid metabolism pathway, which may be linked to the regulation of longevity. Plays a role in ascaroside-mediated longevity and stress resistance. The protein is NAD-dependent protein deacetylase sir-2.1 (sir-2.1) of Caenorhabditis briggsae.